Reading from the N-terminus, the 96-residue chain is MAKYEILYIIRPNIEEEAKNALVARFDSILTDNGATVVESKTWEKRRLAYEIQDFREGLYHIVXVEANDDAALKEFDRLSKINADILRHMIVKIDA.

This sequence belongs to the bacterial ribosomal protein bS6 family.

In terms of biological role, binds together with bS18 to 16S ribosomal RNA. This Streptococcus pneumoniae serotype 19F (strain G54) protein is Small ribosomal subunit protein bS6.